Here is a 238-residue protein sequence, read N- to C-terminus: Pyridoxine 5'-phosphate synthase (238 aa).

The 3-amino-2-oxopropyl phosphate site is built by Asn-7 and Arg-18. His-43 acts as the Proton acceptor in catalysis. 1-deoxy-D-xylulose 5-phosphate-binding residues include Arg-45 and His-50. Glu-70 functions as the Proton acceptor in the catalytic mechanism. Thr-100 is a binding site for 1-deoxy-D-xylulose 5-phosphate. Residue His-190 is the Proton donor of the active site. Residues Asp-191 and 213–214 contribute to the 3-amino-2-oxopropyl phosphate site; that span reads GH.

The protein belongs to the PNP synthase family. As to quaternary structure, homooctamer; tetramer of dimers.

It is found in the cytoplasm. The enzyme catalyses 3-amino-2-oxopropyl phosphate + 1-deoxy-D-xylulose 5-phosphate = pyridoxine 5'-phosphate + phosphate + 2 H2O + H(+). Its pathway is cofactor biosynthesis; pyridoxine 5'-phosphate biosynthesis; pyridoxine 5'-phosphate from D-erythrose 4-phosphate: step 5/5. Its function is as follows. Catalyzes the complicated ring closure reaction between the two acyclic compounds 1-deoxy-D-xylulose-5-phosphate (DXP) and 3-amino-2-oxopropyl phosphate (1-amino-acetone-3-phosphate or AAP) to form pyridoxine 5'-phosphate (PNP) and inorganic phosphate. The polypeptide is Pyridoxine 5'-phosphate synthase (Parabacteroides distasonis (strain ATCC 8503 / DSM 20701 / CIP 104284 / JCM 5825 / NCTC 11152)).